The sequence spans 222 residues: Uracil-DNA glycosylase (222 aa).

Aspartate 66 (proton acceptor) is an active-site residue.

The protein belongs to the uracil-DNA glycosylase (UDG) superfamily. UNG family.

The protein resides in the cytoplasm. The catalysed reaction is Hydrolyzes single-stranded DNA or mismatched double-stranded DNA and polynucleotides, releasing free uracil.. Its function is as follows. Excises uracil residues from the DNA which can arise as a result of misincorporation of dUMP residues by DNA polymerase or due to deamination of cytosine. The polypeptide is Uracil-DNA glycosylase (Porphyromonas gingivalis (strain ATCC 33277 / DSM 20709 / CIP 103683 / JCM 12257 / NCTC 11834 / 2561)).